The chain runs to 138 residues: Large ribosomal subunit protein uL16 (138 aa).

This sequence belongs to the universal ribosomal protein uL16 family. As to quaternary structure, part of the 50S ribosomal subunit.

In terms of biological role, binds 23S rRNA and is also seen to make contacts with the A and possibly P site tRNAs. The polypeptide is Large ribosomal subunit protein uL16 (Mycoplasmoides gallisepticum (strain R(low / passage 15 / clone 2)) (Mycoplasma gallisepticum)).